The primary structure comprises 126 residues: Holo-[acyl-carrier-protein] synthase (126 aa).

Residues Asp8 and Glu57 each coordinate Mg(2+).

The protein belongs to the P-Pant transferase superfamily. AcpS family. Mg(2+) serves as cofactor.

The protein localises to the cytoplasm. It carries out the reaction apo-[ACP] + CoA = holo-[ACP] + adenosine 3',5'-bisphosphate + H(+). In terms of biological role, transfers the 4'-phosphopantetheine moiety from coenzyme A to a Ser of acyl-carrier-protein. The chain is Holo-[acyl-carrier-protein] synthase from Geobacter metallireducens (strain ATCC 53774 / DSM 7210 / GS-15).